The sequence spans 679 residues: Penicillin-binding protein 1A (679 aa).

Positions 1–14 (MTERKREHKDRKQN) are enriched in basic residues. A disordered region spans residues 1–20 (MTERKREHKDRKQNKNSPKN). At 1-30 (MTERKREHKDRKQNKNSPKNQSKVTKFLKW) the chain is on the cytoplasmic side. Residues 31 to 51 (FFIGILLLGITAVTVVGIYVL) form a helical; Signal-anchor for type II membrane protein membrane-spanning segment. The Extracellular portion of the chain corresponds to 52 to 679 (SIIRSSPELD…QYKEVDNLVE (628 aa)). Positions 72-244 (SILYDDQGNF…PTSYDGLSEA (173 aa)) are transglycosylase. E111 acts as the Proton donor; for transglycosylase activity in catalysis. Residues 378–663 (ASATIIDYKT…TSPIFGKIMG (286 aa)) form a transpeptidase region. S417 (acyl-ester intermediate; for transpeptidase activity) is an active-site residue.

It in the N-terminal section; belongs to the glycosyltransferase 51 family. This sequence in the C-terminal section; belongs to the transpeptidase family.

It is found in the cell membrane. The enzyme catalyses [GlcNAc-(1-&gt;4)-Mur2Ac(oyl-L-Ala-gamma-D-Glu-L-Lys-D-Ala-D-Ala)](n)-di-trans,octa-cis-undecaprenyl diphosphate + beta-D-GlcNAc-(1-&gt;4)-Mur2Ac(oyl-L-Ala-gamma-D-Glu-L-Lys-D-Ala-D-Ala)-di-trans,octa-cis-undecaprenyl diphosphate = [GlcNAc-(1-&gt;4)-Mur2Ac(oyl-L-Ala-gamma-D-Glu-L-Lys-D-Ala-D-Ala)](n+1)-di-trans,octa-cis-undecaprenyl diphosphate + di-trans,octa-cis-undecaprenyl diphosphate + H(+). It carries out the reaction Preferential cleavage: (Ac)2-L-Lys-D-Ala-|-D-Ala. Also transpeptidation of peptidyl-alanyl moieties that are N-acyl substituents of D-alanine.. Its pathway is cell wall biogenesis; peptidoglycan biosynthesis. In terms of biological role, cell wall formation. Synthesis of cross-linked peptidoglycan from the lipid intermediates. The enzyme has a penicillin-insensitive transglycosylase N-terminal domain (formation of linear glycan strands) and a penicillin-sensitive transpeptidase C-terminal domain (cross-linking of the peptide subunits). This Clostridium perfringens (strain 13 / Type A) protein is Penicillin-binding protein 1A (pbpA).